Reading from the N-terminus, the 1304-residue chain is Splicing factor 3B subunit 1 (1304 aa).

Disordered regions lie at residues 100 to 119 and 124 to 148; these read QYDP…EDEY and RTMI…PKMN. The span at 104–119 shows a compositional bias: basic and acidic residues; sequence FAEHRPPKIADREDEY. At Thr125 the chain carries Phosphothreonine. Position 129 is a phosphoserine (Ser129). Lys141 is modified (N6-acetyllysine). Thr142 is modified (phosphothreonine). Arg157 carries the citrulline modification. A disordered region spans residues 172–360; that stretch reads LAEKAKAGEL…PVLTPGKTPI (189 aa). Ser194 is subject to Phosphoserine. Thr203, Thr207, and Thr211 each carry phosphothreonine. Lys214 is modified (N6-acetyllysine; alternate). Lys214 is covalently cross-linked (Glycyl lysine isopeptide (Lys-Gly) (interchain with G-Cter in SUMO2); alternate). Phosphothreonine is present on residues Thr223 and Thr227. The interval 223 to 491 is interaction with PPP1R8; the sequence is TPGHTPSLRW…VDESTLSPEE (269 aa). The residue at position 229 (Ser229) is a Phosphoserine. Residues 231 to 241 show a composition bias toward basic and acidic residues; it reads RWDETPGRAKG. Phosphothreonine is present on residues Thr235, Thr244, Thr248, Thr257, Thr261, Thr267, Thr273, and Thr278. Ser287 is subject to Phosphoserine. A compositionally biased stretch (basic and acidic residues) spans 291-304; the sequence is NRWDETPKTERDTP. Phosphothreonine occurs at positions 296, 299, 303, and 313. Ser322 bears the Phosphoserine mark. Residues Thr326 and Thr328 each carry the phosphothreonine modification. The residue at position 332 (Ser332) is a Phosphoserine. A Phosphothreonine modification is found at Thr341. The span at 342 to 352 shows a compositional bias: polar residues; the sequence is PASQMGGSTPV. Residues Ser344 and Ser349 each carry the phosphoserine modification. Phosphothreonine is present on residues Thr350 and Thr354. A Phosphoserine modification is found at Ser400. A Glycyl lysine isopeptide (Lys-Gly) (interchain with G-Cter in SUMO2); alternate cross-link involves residue Lys413. A Glycyl lysine isopeptide (Lys-Gly) (interchain with G-Cter in SUMO1); alternate cross-link involves residue Lys413. Thr426 bears the Phosphothreonine mark. Residue Lys430 forms a Glycyl lysine isopeptide (Lys-Gly) (interchain with G-Cter in SUMO2) linkage. Thr434 carries the phosphothreonine; by DYRK1A modification. Phosphothreonine is present on Thr436. The residue at position 488 (Ser488) is a Phosphoserine. HEAT repeat units lie at residues 529-568, 569-603, 604-641, 643-677, 680-718, 763-801, 843-881, 1010-1048, 1052-1090, 1122-1160, and 1163-1201; these read GPLF…DLVR, PYVH…LAKA, AGLA…ALGI, SLLP…LMGC, LPHL…AATP, NYYT…TDGV, KVGA…NLGA, TPPI…RGAE, AREW…AIGP, TCSP…YIGE, and KDYI…GVYG. Positions 547–550 are interaction with PHF5A; sequence QERH. Residues Lys554 and Lys562 each carry the N6-acetyllysine modification. Residues 1156–1157 are interaction with PHF5A; that stretch reads EY. Positions 1248 to 1304 are interaction with SF3B3 and SF3B5; sequence QYCLQGLFHPARKVRDVYWKIYNSIYIGSQDALIAHYPRIYNDDKNTYIRYDLDYIL.

It belongs to the SF3B1 family. Component of the 17S U2 SnRNP complex, a ribonucleoprotein complex that contains small nuclear RNA (snRNA) U2 and a number of specific proteins. Part of the SF3B subcomplex of the 17S U2 SnRNP complex. SF3B associates with the splicing subcomplex SF3A and a 12S RNA unit to form the U2 small nuclear ribonucleoproteins complex (U2 snRNP). Within the SF3B complex, interacts directly (via HEAT domain) with SF3B3, SF3B5, SF3B6 and (via HEAT domain) with PHF5A. The SF3B subcomplex interacts with U2AF2. Identified in the spliceosome C complex. Component of the minor (U12-type spliceosome) spliceosome. Within the minor spliceosome complex, interacts with SCNM1 and CRIPT. Component of the B-WICH complex, at least composed of SMARCA5/SNF2H, BAZ1B/WSTF, SF3B1, DEK, MYO1C, ERCC6, MYBBP1A and DDX21. Phosphorylated form interacts with PPP1R8. Interacts with PQBP1. Interacts with RBM17. Interacts with RBM39. Interacts with SETX. Interacts with RBM15. Interacts with USH1G. Interacts with SDE2. Interacts with U2AF1. Interacts with CACTIN. Interacts with ZRSR1. Interacts with CYREN. In terms of processing, phosphorylated. Phosphorylation occurs concomitantly with the splicing catalytic steps. Phosphorylation on Thr-244, Thr-248 and Thr-313 by cyclin-dependent kinases promotes interaction with PPP1R8 during mitosis. Citrullinated by PADI4. As to expression, ubiquitous.

It localises to the nucleus. The protein resides in the nucleus speckle. Functionally, component of the 17S U2 SnRNP complex of the spliceosome, a large ribonucleoprotein complex that removes introns from transcribed pre-mRNAs. The 17S U2 SnRNP complex (1) directly participates in early spliceosome assembly and (2) mediates recognition of the intron branch site during pre-mRNA splicing by promoting the selection of the pre-mRNA branch-site adenosine, the nucleophile for the first step of splicing. Within the 17S U2 SnRNP complex, SF3B1 is part of the SF3B subcomplex, which is required for 'A' complex assembly formed by the stable binding of U2 snRNP to the branchpoint sequence in pre-mRNA. Sequence independent binding of SF3A and SF3B subcomplexes upstream of the branch site is essential, it may anchor U2 snRNP to the pre-mRNA. May also be involved in the assembly of the 'E' complex. Also acts as a component of the minor spliceosome, which is involved in the splicing of U12-type introns in pre-mRNAs. Together with other U2 snRNP complex components may also play a role in the selective processing of microRNAs (miRNAs) from the long primary miRNA transcript, pri-miR-17-92. The polypeptide is Splicing factor 3B subunit 1 (Mus musculus (Mouse)).